The sequence spans 364 residues: GDSL esterase/lipase At1g29660 (364 aa).

Positions M1–A26 are cleaved as a signal peptide. S39 (nucleophile) is an active-site residue. Residues D328 and H331 each act as charge relay system in the active site.

It belongs to the 'GDSL' lipolytic enzyme family. In terms of tissue distribution, found in phloem exudates.

The protein resides in the secreted. It is found in the extracellular space. Its subcellular location is the apoplast. In terms of biological role, involved in EDS1-dependent systemic acquired resistance, maybe in phloem-mediated long-distance signaling. This chain is GDSL esterase/lipase At1g29660, found in Arabidopsis thaliana (Mouse-ear cress).